Here is a 325-residue protein sequence, read N- to C-terminus: MSETATWQPSASIPNLLKRAAIMAEIRRFFADRGVLEVETPCMSQATVTDIHLFPFETRFVGPGHSQGINLYLMTSPEYHMKRLLAAGCGPVFQLCRSFRNEEMGRHHNPEFTMLEWYRPHYDMYRLMNEVDDLLQQVLDCQPAESLSYQQAFQRHLEIDPLSADKTQLREAAAKLDLSNIADTEEDRDTLLQLLFTMGVEPHIGKEKPTFIYHFPASQASLAQISTEDHRVAERFEVYYKGIELANGFHELTDAREQQQRFEQDNRKRAARGLPQQPIDQNLLDALAAGLPDCSGVALGIDRLVMLALGAESLADVIAFTVDRA.

Residue 76–78 (SPE) participates in substrate binding. ATP is bound by residues 100–102 (RNE) and N109. Residue Y118 coordinates substrate. ATP is bound at residue 244–245 (EL). E251 serves as a coordination point for substrate. G300 contacts ATP.

This sequence belongs to the class-II aminoacyl-tRNA synthetase family. EpmA subfamily. In terms of assembly, homodimer.

The catalysed reaction is D-beta-lysine + L-lysyl-[protein] + ATP = N(6)-((3R)-3,6-diaminohexanoyl)-L-lysyl-[protein] + AMP + diphosphate + H(+). With EpmB is involved in the beta-lysylation step of the post-translational modification of translation elongation factor P (EF-P) on 'Lys-34'. Catalyzes the ATP-dependent activation of (R)-beta-lysine produced by EpmB, forming a lysyl-adenylate, from which the beta-lysyl moiety is then transferred to the epsilon-amino group of EF-P 'Lys-34'. The sequence is that of Elongation factor P--(R)-beta-lysine ligase from Salmonella dublin (strain CT_02021853).